The following is a 167-amino-acid chain: Phosphopantetheine adenylyltransferase (167 aa).

Ser8 contributes to the substrate binding site. Residues 8–9 (SF) and His16 each bind ATP. Substrate is bound by residues Lys40, Leu74, and Arg88. ATP-binding positions include 89-91 (GLR), Glu99, and 123-129 (WSFVSSS).

The protein belongs to the bacterial CoaD family. As to quaternary structure, homohexamer. Mg(2+) is required as a cofactor.

The protein localises to the cytoplasm. It carries out the reaction (R)-4'-phosphopantetheine + ATP + H(+) = 3'-dephospho-CoA + diphosphate. It functions in the pathway cofactor biosynthesis; coenzyme A biosynthesis; CoA from (R)-pantothenate: step 4/5. Functionally, reversibly transfers an adenylyl group from ATP to 4'-phosphopantetheine, yielding dephospho-CoA (dPCoA) and pyrophosphate. This is Phosphopantetheine adenylyltransferase from Deinococcus radiodurans (strain ATCC 13939 / DSM 20539 / JCM 16871 / CCUG 27074 / LMG 4051 / NBRC 15346 / NCIMB 9279 / VKM B-1422 / R1).